The following is a 97-amino-acid chain: DNA/RNA-binding protein Alba (97 aa).

Position 15 is an N6-acetyllysine (K15).

This sequence belongs to the histone-like Alba family. Post-translationally, acetylated. Acetylation at Lys-15 decreases DNA-binding affinity.

The protein resides in the cytoplasm. It is found in the chromosome. Binds double-stranded DNA tightly but without sequence specificity. Involved in DNA compaction. The sequence is that of DNA/RNA-binding protein Alba from Ignicoccus hospitalis (strain KIN4/I / DSM 18386 / JCM 14125).